A 371-amino-acid polypeptide reads, in one-letter code: tRNA-specific 2-thiouridylase MnmA (371 aa).

ATP-binding positions include 13–20 (GMSGGVDS) and M39. Residues 99–101 (NPD) form an interaction with target base in tRNA region. C104 functions as the Nucleophile in the catalytic mechanism. C104 and C200 are oxidised to a cystine. G128 serves as a coordination point for ATP. An interaction with tRNA region spans residues 150–152 (KDQ). The Cysteine persulfide intermediate role is filled by C200. The segment at 308 to 309 (RY) is interaction with tRNA.

It belongs to the MnmA/TRMU family.

Its subcellular location is the cytoplasm. The enzyme catalyses S-sulfanyl-L-cysteinyl-[protein] + uridine(34) in tRNA + AH2 + ATP = 2-thiouridine(34) in tRNA + L-cysteinyl-[protein] + A + AMP + diphosphate + H(+). In terms of biological role, catalyzes the 2-thiolation of uridine at the wobble position (U34) of tRNA, leading to the formation of s(2)U34. The polypeptide is tRNA-specific 2-thiouridylase MnmA (Listeria monocytogenes serotype 4a (strain HCC23)).